The following is a 505-amino-acid chain: uncharacterized protein (505 aa).

The active-site Proton acceptor is H431.

The protein belongs to the GMC oxidoreductase family. Requires FAD as cofactor.

This is an uncharacterized protein from Sinorhizobium fredii (strain NBRC 101917 / NGR234).